Reading from the N-terminus, the 198-residue chain is Imidazoleglycerol-phosphate dehydratase (198 aa).

It belongs to the imidazoleglycerol-phosphate dehydratase family.

It is found in the cytoplasm. The catalysed reaction is D-erythro-1-(imidazol-4-yl)glycerol 3-phosphate = 3-(imidazol-4-yl)-2-oxopropyl phosphate + H2O. It participates in amino-acid biosynthesis; L-histidine biosynthesis; L-histidine from 5-phospho-alpha-D-ribose 1-diphosphate: step 6/9. The sequence is that of Imidazoleglycerol-phosphate dehydratase from Nitratidesulfovibrio vulgaris (strain DP4) (Desulfovibrio vulgaris).